Reading from the N-terminus, the 507-residue chain is ATP synthase subunit alpha, chloroplastic (507 aa).

Residue Gly170–Thr177 participates in ATP binding.

The protein belongs to the ATPase alpha/beta chains family. As to quaternary structure, F-type ATPases have 2 components, CF(1) - the catalytic core - and CF(0) - the membrane proton channel. CF(1) has five subunits: alpha(3), beta(3), gamma(1), delta(1), epsilon(1). CF(0) has four main subunits: a, b, b' and c.

It is found in the plastid. The protein localises to the chloroplast thylakoid membrane. The catalysed reaction is ATP + H2O + 4 H(+)(in) = ADP + phosphate + 5 H(+)(out). Functionally, produces ATP from ADP in the presence of a proton gradient across the membrane. The alpha chain is a regulatory subunit. This chain is ATP synthase subunit alpha, chloroplastic, found in Nandina domestica (Heavenly bamboo).